We begin with the raw amino-acid sequence, 449 residues long: Glycosyl hydrolase-like protein 1 (449 aa).

A beta-D-glucoside is bound by residues glutamine 22, histidine 119, 164 to 165 (NE), tyrosine 292, glutamate 350, tryptophan 393, and tyrosine 406. The active-site Proton donor is glutamate 165. The active-site Nucleophile is the glutamate 350.

It belongs to the glycosyl hydrolase 1 family. Mainly expressed in flowers, flower buds and young leaves, and, to a lesser extent, in old leaves, stems and roots.

It localises to the cytoplasm. The protein operates within secondary metabolite biosynthesis; terpenoid biosynthesis. In terms of biological role, component of the oleanane-type triterpene saponins (e.g. saponarioside A and saponarioside B) biosynthetic pathway, leading to the production of natural products with detergent properties used as traditional sources of soap. Beta-glycosidase that catalyzes the transfer of glucose moiety to QA-triFRXX to produce QA-triF(Q)RXX via the elongation of the C-28 sugar chain with a D-quinovose. This chain is Glycosyl hydrolase-like protein 1, found in Saponaria officinalis (Common soapwort).